The sequence spans 214 residues: Putative archaetidylserine decarboxylase proenzyme (214 aa).

Ser-180 (schiff-base intermediate with substrate; via pyruvic acid) is an active-site residue. Pyruvic acid (Ser); by autocatalysis is present on Ser-180.

It belongs to the phosphatidylserine decarboxylase family. PSD-A subfamily. As to quaternary structure, heterodimer of a large membrane-associated beta subunit and a small pyruvoyl-containing alpha subunit. Pyruvate serves as cofactor. In terms of processing, is synthesized initially as an inactive proenzyme. Formation of the active enzyme involves a self-maturation process in which the active site pyruvoyl group is generated from an internal serine residue via an autocatalytic post-translational modification. Two non-identical subunits are generated from the proenzyme in this reaction, and the pyruvate is formed at the N-terminus of the alpha chain, which is derived from the carboxyl end of the proenzyme. The post-translation cleavage follows an unusual pathway, termed non-hydrolytic serinolysis, in which the side chain hydroxyl group of the serine supplies its oxygen atom to form the C-terminus of the beta chain, while the remainder of the serine residue undergoes an oxidative deamination to produce ammonia and the pyruvoyl prosthetic group on the alpha chain.

It is found in the cell membrane. The enzyme catalyses archaetidylserine + H(+) = archaetidylethanolamine + CO2. Its function is as follows. Catalyzes the formation of archaetidylethanolamine (PtdEtn) from archaetidylserine (PtdSer). The polypeptide is Putative archaetidylserine decarboxylase proenzyme (Methanopyrus kandleri (strain AV19 / DSM 6324 / JCM 9639 / NBRC 100938)).